A 264-amino-acid chain; its full sequence is Phycocyanobilin:ferredoxin oxidoreductase (264 aa).

This sequence belongs to the HY2 family.

The enzyme catalyses (2R,3Z)-phycocyanobilin + 4 oxidized [2Fe-2S]-[ferredoxin] = biliverdin IXalpha + 4 reduced [2Fe-2S]-[ferredoxin] + 4 H(+). Catalyzes the four-electron reduction of biliverdin IX-alpha (2-electron reduction at both the A and D rings); the reaction proceeds via an isolatable 2-electron intermediate, 181,182-dihydrobiliverdin. The chain is Phycocyanobilin:ferredoxin oxidoreductase (pcyA) from Prochlorococcus marinus (strain MIT 9313).